The sequence spans 347 residues: MAGEGALQFYRDLPKVELHAHLNGSISTATMKKLMARKPHLDIQHGMTMIDKGQKRTLEECFQMFKIIHQITDTAEDILLVTKDVIKEFAADGVKYLELRSTPRDTPAGLTKQAYVETVLEGIKQCKEEGVDIDVRFLLAIDRRGGPTAAKETVKLAEDFFCSSNELVLGLDLSGDPTVGHGRDFMEPLNKARQSGLKLALHLSEIPSQTEETELLLGLPPDRIGHGTFLTTSAHIVEIVKKQHIPLELCITSNIKGQTVSSYNEHHFGFWYNLHHPFVLCTDDKGVFATDLSVEYEIAAKTFNLTPHHVWDLSYQAIDYTFASADVKANLKEKWLLLKPDVFRHAL.

Residues histidine 19 and histidine 21 each coordinate Zn(2+). Residues histidine 21, asparagine 23, histidine 69, 101–104, aspartate 142, and glycine 175 contribute to the N(6)-methyl-AMP site; that span reads STPR. Histidine 202 is a Zn(2+) binding site. Residues glutamate 205, aspartate 283, and aspartate 284 each coordinate N(6)-methyl-AMP. The active-site Proton donor is the glutamate 205. Aspartate 283 provides a ligand contact to Zn(2+).

Belongs to the metallo-dependent hydrolases superfamily. Adenosine and AMP deaminases family. In terms of assembly, monomer. Requires Zn(2+) as cofactor.

The catalysed reaction is N(6)-methyl-AMP + H2O + H(+) = IMP + methylamine. Functionally, catalyzes the hydrolysis of the free cytosolic methylated adenosine nucleotide N(6)-methyl-AMP (N6-mAMP) to produce inositol monophosphate (IMP) and methylamine. Is required for the catabolism of cytosolic N6-mAMP, which is derived from the degradation of mRNA containing N6-methylated adenine (m6A). This Xenopus laevis (African clawed frog) protein is N6-Methyl-AMP deaminase-L (mapda.L).